The following is a 474-amino-acid chain: tRNA-2-methylthio-N(6)-dimethylallyladenosine synthase (474 aa).

Residues 21–138 (ERVYVETQGC…LPQMLARRRS (118 aa)) form the MTTase N-terminal domain. The [4Fe-4S] cluster site is built by Cys30, Cys67, Cys101, Cys175, Cys179, and Cys182. In terms of domain architecture, Radical SAM core spans 161 to 395 (RAEGPTAYVS…ARLHEQQSAA (235 aa)). In terms of domain architecture, TRAM spans 397–460 (RALLGTRQSV…THSLRGRVVS (64 aa)).

This sequence belongs to the methylthiotransferase family. MiaB subfamily. As to quaternary structure, monomer. Requires [4Fe-4S] cluster as cofactor.

The protein localises to the cytoplasm. It catalyses the reaction N(6)-dimethylallyladenosine(37) in tRNA + (sulfur carrier)-SH + AH2 + 2 S-adenosyl-L-methionine = 2-methylsulfanyl-N(6)-dimethylallyladenosine(37) in tRNA + (sulfur carrier)-H + 5'-deoxyadenosine + L-methionine + A + S-adenosyl-L-homocysteine + 2 H(+). Its function is as follows. Catalyzes the methylthiolation of N6-(dimethylallyl)adenosine (i(6)A), leading to the formation of 2-methylthio-N6-(dimethylallyl)adenosine (ms(2)i(6)A) at position 37 in tRNAs that read codons beginning with uridine. This chain is tRNA-2-methylthio-N(6)-dimethylallyladenosine synthase, found in Halorhodospira halophila (strain DSM 244 / SL1) (Ectothiorhodospira halophila (strain DSM 244 / SL1)).